The following is a 551-amino-acid chain: Probable malate:quinone oxidoreductase (551 aa).

The segment covering 525 to 544 (QTAAAAPQAQPQLKPQPDAK) has biased composition (low complexity). The tract at residues 525-551 (QTAAAAPQAQPQLKPQPDAKPVADIAL) is disordered.

Belongs to the MQO family. It depends on FAD as a cofactor.

It catalyses the reaction (S)-malate + a quinone = a quinol + oxaloacetate. The protein operates within carbohydrate metabolism; tricarboxylic acid cycle; oxaloacetate from (S)-malate (quinone route): step 1/1. The chain is Probable malate:quinone oxidoreductase from Enterobacter sp. (strain 638).